The sequence spans 558 residues: Membrane protein insertase YidC (558 aa).

5 consecutive transmembrane segments (helical) span residues 3-23 (IKRT…FDNW), 364-384 (FVGN…AVFF), 438-458 (LPVV…LASV), 477-497 (PYFI…KLNP), and 508-528 (MMFM…GLVL).

Belongs to the OXA1/ALB3/YidC family. Type 1 subfamily. As to quaternary structure, interacts with the Sec translocase complex via SecD. Specifically interacts with transmembrane segments of nascent integral membrane proteins during membrane integration.

The protein localises to the cell inner membrane. Functionally, required for the insertion and/or proper folding and/or complex formation of integral membrane proteins into the membrane. Involved in integration of membrane proteins that insert both dependently and independently of the Sec translocase complex, as well as at least some lipoproteins. Aids folding of multispanning membrane proteins. In Burkholderia pseudomallei (strain 668), this protein is Membrane protein insertase YidC.